The chain runs to 318 residues: 4-hydroxy-3-methylbut-2-enyl diphosphate reductase (318 aa).

Residue Cys-12 participates in [4Fe-4S] cluster binding. His-41 and His-74 together coordinate (2E)-4-hydroxy-3-methylbut-2-enyl diphosphate. Residues His-41 and His-74 each contribute to the dimethylallyl diphosphate site. Positions 41 and 74 each coordinate isopentenyl diphosphate. Cys-96 is a binding site for [4Fe-4S] cluster. Residue His-124 coordinates (2E)-4-hydroxy-3-methylbut-2-enyl diphosphate. Residue His-124 coordinates dimethylallyl diphosphate. Position 124 (His-124) interacts with isopentenyl diphosphate. Glu-126 functions as the Proton donor in the catalytic mechanism. Thr-167 is a (2E)-4-hydroxy-3-methylbut-2-enyl diphosphate binding site. Residue Cys-197 coordinates [4Fe-4S] cluster. (2E)-4-hydroxy-3-methylbut-2-enyl diphosphate is bound by residues Ser-225, Ser-226, Asn-227, and Ser-269. The dimethylallyl diphosphate site is built by Ser-225, Ser-226, Asn-227, and Ser-269. The isopentenyl diphosphate site is built by Ser-225, Ser-226, Asn-227, and Ser-269.

It belongs to the IspH family. [4Fe-4S] cluster serves as cofactor.

It carries out the reaction isopentenyl diphosphate + 2 oxidized [2Fe-2S]-[ferredoxin] + H2O = (2E)-4-hydroxy-3-methylbut-2-enyl diphosphate + 2 reduced [2Fe-2S]-[ferredoxin] + 2 H(+). The enzyme catalyses dimethylallyl diphosphate + 2 oxidized [2Fe-2S]-[ferredoxin] + H2O = (2E)-4-hydroxy-3-methylbut-2-enyl diphosphate + 2 reduced [2Fe-2S]-[ferredoxin] + 2 H(+). It functions in the pathway isoprenoid biosynthesis; dimethylallyl diphosphate biosynthesis; dimethylallyl diphosphate from (2E)-4-hydroxy-3-methylbutenyl diphosphate: step 1/1. It participates in isoprenoid biosynthesis; isopentenyl diphosphate biosynthesis via DXP pathway; isopentenyl diphosphate from 1-deoxy-D-xylulose 5-phosphate: step 6/6. In terms of biological role, catalyzes the conversion of 1-hydroxy-2-methyl-2-(E)-butenyl 4-diphosphate (HMBPP) into a mixture of isopentenyl diphosphate (IPP) and dimethylallyl diphosphate (DMAPP). Acts in the terminal step of the DOXP/MEP pathway for isoprenoid precursor biosynthesis. This chain is 4-hydroxy-3-methylbut-2-enyl diphosphate reductase, found in Francisella tularensis subsp. mediasiatica (strain FSC147).